The following is a 765-amino-acid chain: Probable glycosyltransferase STELLO2 (765 aa).

The Cytoplasmic portion of the chain corresponds to 1-43 (MLVQDRVAPKPPKSRIRELPSRDRFAEPKILDFSSWVSDNVYR). The helical transmembrane segment at 44-64 (IVIIFLFIVTVAAFFFLYNTT) threads the bilayer. The Lumenal segment spans residues 65 to 765 (DTASLLCFQS…EGDPLLMELV (701 aa)). N235 and N723 each carry an N-linked (GlcNAc...) asparagine glycan.

This sequence belongs to the STELLO family. As to quaternary structure, homo- and heterodimer with STL1. Interacts with CESA1, CESA3, CESA4, CESA6, CESA7 and CESA8, but not with GOT1. Expressed in cells that are expanding or producing secondary cell walls.

Its subcellular location is the golgi apparatus membrane. In terms of biological role, probable glycosyltransferase regulating the assembly and trafficking of cellulose synthase complexes. This Arabidopsis thaliana (Mouse-ear cress) protein is Probable glycosyltransferase STELLO2.